A 429-amino-acid chain; its full sequence is Adenylosuccinate synthetase (429 aa).

GTP is bound by residues glycine 12 to lysine 18 and glycine 40 to threonine 42. The active-site Proton acceptor is the aspartate 13. Aspartate 13 and glycine 40 together coordinate Mg(2+). IMP contacts are provided by residues aspartate 13 to lysine 16, asparagine 38 to histidine 41, threonine 128, arginine 142, glutamine 223, threonine 238, and arginine 302. Histidine 41 acts as the Proton donor in catalysis. Residue valine 298–arginine 304 participates in substrate binding. GTP contacts are provided by residues arginine 304, lysine 330–aspartate 332, and glycine 412–glycine 414.

Belongs to the adenylosuccinate synthetase family. As to quaternary structure, homodimer. Requires Mg(2+) as cofactor.

It is found in the cytoplasm. It catalyses the reaction IMP + L-aspartate + GTP = N(6)-(1,2-dicarboxyethyl)-AMP + GDP + phosphate + 2 H(+). It participates in purine metabolism; AMP biosynthesis via de novo pathway; AMP from IMP: step 1/2. In terms of biological role, plays an important role in the de novo pathway of purine nucleotide biosynthesis. Catalyzes the first committed step in the biosynthesis of AMP from IMP. This Corynebacterium glutamicum (strain R) protein is Adenylosuccinate synthetase.